The sequence spans 442 residues: PTS system oligo-beta-mannoside-specific EIIC component (442 aa).

The PTS EIIC type-3 domain maps to 5 to 411 (ISQFLVPIAG…LIVFVIWFPF (407 aa)). 11 helical membrane passes run 28–48 (AFML…LTNL), 67–87 (FGIA…FGIG), 97–117 (EAVF…PFII), 138–157 (GMFL…RRIV), 177–197 (FAAL…NVMV), 205–225 (MHDV…SGII), 228–248 (LIAV…QIII), 286–306 (TVGM…LIFM), 329–349 (PIIF…WVLA), 365–385 (LVPP…INGI), and 391–411 (IMGG…WFPF).

It is found in the cell membrane. In terms of biological role, the phosphoenolpyruvate-dependent sugar phosphotransferase system (sugar PTS), a major carbohydrate active transport system, catalyzes the phosphorylation of incoming sugar substrates concomitantly with their translocation across the cell membrane. The enzyme II GmuABC PTS system is involved in the transport of oligo-glucomannans such as cellobiose or mannobiose. The sequence is that of PTS system oligo-beta-mannoside-specific EIIC component from Bacillus subtilis (strain 168).